The following is a 185-amino-acid chain: Threonylcarbamoyl-AMP synthase (185 aa).

The YrdC-like domain occupies 4 to 185 (DWRVQQVARV…LRSGEVIRPA (182 aa)).

Belongs to the SUA5 family. TsaC subfamily.

The protein localises to the cytoplasm. The enzyme catalyses L-threonine + hydrogencarbonate + ATP = L-threonylcarbamoyladenylate + diphosphate + H2O. In terms of biological role, required for the formation of a threonylcarbamoyl group on adenosine at position 37 (t(6)A37) in tRNAs that read codons beginning with adenine. Catalyzes the conversion of L-threonine, HCO(3)(-)/CO(2) and ATP to give threonylcarbamoyl-AMP (TC-AMP) as the acyladenylate intermediate, with the release of diphosphate. In Stutzerimonas stutzeri (strain A1501) (Pseudomonas stutzeri), this protein is Threonylcarbamoyl-AMP synthase.